Reading from the N-terminus, the 422-residue chain is Interferon-induced protein 44 (422 aa).

The region spanning 1–147 (MAMRTRLTWQ…IQECEAFRCE (147 aa)) is the TLDc domain.

It belongs to the IFI44 family.

The protein localises to the cytoplasm. Functionally, this protein aggregates to form microtubular structures. The chain is Interferon-induced protein 44 (Ifi44) from Mus musculus (Mouse).